The primary structure comprises 126 residues: Glycine cleavage system H protein (126 aa).

The Lipoyl-binding domain maps to 22-104; the sequence is TVTIGITEYA…YEKAWMVKVK (83 aa). K63 carries the post-translational modification N6-lipoyllysine.

It belongs to the GcvH family. In terms of assembly, the glycine cleavage system is composed of four proteins: P, T, L and H. The cofactor is (R)-lipoate.

In terms of biological role, the glycine cleavage system catalyzes the degradation of glycine. The H protein shuttles the methylamine group of glycine from the P protein to the T protein. Its function is as follows. Is also involved in protein lipoylation via its role as an octanoyl/lipoyl carrier protein intermediate. The protein is Glycine cleavage system H protein of Staphylococcus carnosus (strain TM300).